Here is a 432-residue protein sequence, read N- to C-terminus: Transcriptional adapter 3-B (432 aa).

Disordered stretches follow at residues 90 to 124 (HELG…PKSR) and 275 to 315 (SPVE…KSLE). A compositionally biased stretch (polar residues) spans 293–305 (DGASTSPRSQNKP). The stretch at 335-398 (ADDSEDEVLA…NEVMDAFRKI (64 aa)) forms a coiled coil.

It belongs to the NGG1 family.

It is found in the nucleus. Functionally, functions as a component of the PCAF complex. The PCAF complex is capable of efficiently acetylating histones in a nucleosomal context. This chain is Transcriptional adapter 3-B (tada3-b), found in Xenopus laevis (African clawed frog).